Here is a 474-residue protein sequence, read N- to C-terminus: L-arabinose isomerase 2 (474 aa).

Glu306, Glu331, His348, and His447 together coordinate Mn(2+).

Belongs to the arabinose isomerase family. Mn(2+) serves as cofactor.

It catalyses the reaction beta-L-arabinopyranose = L-ribulose. The protein operates within carbohydrate degradation; L-arabinose degradation via L-ribulose; D-xylulose 5-phosphate from L-arabinose (bacterial route): step 1/3. Catalyzes the conversion of L-arabinose to L-ribulose. This is L-arabinose isomerase 2 from Bacillus licheniformis (strain ATCC 14580 / DSM 13 / JCM 2505 / CCUG 7422 / NBRC 12200 / NCIMB 9375 / NCTC 10341 / NRRL NRS-1264 / Gibson 46).